Reading from the N-terminus, the 132-residue chain is Ribosome-binding factor A (132 aa).

Positions 113–132 are disordered; sequence EANSTRAKDDDEADTPAKDD.

Belongs to the RbfA family. As to quaternary structure, monomer. Binds 30S ribosomal subunits, but not 50S ribosomal subunits or 70S ribosomes.

It is found in the cytoplasm. Its function is as follows. One of several proteins that assist in the late maturation steps of the functional core of the 30S ribosomal subunit. Associates with free 30S ribosomal subunits (but not with 30S subunits that are part of 70S ribosomes or polysomes). Required for efficient processing of 16S rRNA. May interact with the 5'-terminal helix region of 16S rRNA. The sequence is that of Ribosome-binding factor A from Burkholderia cenocepacia (strain HI2424).